The chain runs to 803 residues: Zinc finger and BTB domain-containing protein 17 (803 aa).

The BTB domain maps to 1-104 (MDFPQHSQHV…VATFLQMQDI (104 aa)). A disordered region spans residues 116 to 295 (EPATSPGGNA…GLRSGTYGDR (180 aa)). Ser-120 is subject to Phosphoserine. Basic and acidic residues predominate over residues 132–142 (GGDKRAKEEKV). 2 stretches are compositionally biased toward low complexity: residues 171-180 (GQAQSAASGA) and 206-217 (AAAEAEAALSES). 2 stretches are compositionally biased toward acidic residues: residues 233–244 (EQKEQEEQEEEG) and 261–272 (EAPEENENEESA). Positions 269–308 (EESAGTDSGQELGSEARGLRSGTYGDRTESKAYGSVIHKC) are interaction with MYC. C2H2-type zinc fingers lie at residues 306-328 (HKCE…IRIH), 334-356 (FSCR…EKTH), 362-384 (YGCE…KKRH), 390-412 (YRCE…QLVH), 418-440 (YQCD…LETH), 446-468 (HKCP…LKIH), 474-496 (LKCR…LRIH), 502-524 (YVCI…VRIH), 530-552 (CQCV…VRQH), 558-580 (YVCE…IRHH), 586-608 (HKCS…IIIH), 614-637 (YLCD…KTVH), and 717-739 (YACD…VRIH). A Glycyl lysine isopeptide (Lys-Gly) (interchain with G-Cter in ubiquitin) cross-link involves residue Lys-397. Lys-481 participates in a covalent cross-link: Glycyl lysine isopeptide (Lys-Gly) (interchain with G-Cter in ubiquitin). The interaction with MYC stretch occupies residues 637 to 718 (HQGKAGIKIL…EDPNTHILYA (82 aa)). Positions 637–803 (HQGKAGIKIL…TAPECPPPAE (167 aa)) are interaction with HCFC1. A disordered region spans residues 779–803 (RDGAEGQPALAETSPTAPECPPPAE).

Belongs to the krueppel C2H2-type zinc-finger protein family. In terms of assembly, homooligomerizes (via the BTB/POZ domain), multimerization is required for DNA binding. Interacts (via the C-terminal zinc fingers) with GIF1; the interaction results in the recruitment of MYB to the CDKN1A/p21 and CDKN1B promoters and repression of transcription. Interacts with TRAF2, interfering with the binding of UBC13 to TRAF2, and inhibiting TRAF2 E3 ligase activity. Interacts with MYC (via the C-terminal helix-loop-helix motif); the interaction inhibits ZBTB17 transactivation and growth arrest activities and renders it insoluble in the nucleus. Also interacts with HCFC1, MAGEA4 and TMPRSS11A. Interacts with BCL6; the interaction inhibits ZBTB17 transactivation activity on target genes involved in cell cycle arrest. Interacts with ZBTB49 isoform 3/ZNF509S1; this interaction blocks ZBTB17-mediated repression of RB1. Undergoes 'Lys-48'-linked polyubiquitination at Lys-397 and Lys-481 and subsequent proteasomal degradation in a TRAF2-dependent manner. As to expression, expressed in germinal center B-cells.

The protein resides in the nucleus. In terms of biological role, transcription factor that can function as an activator or repressor depending on its binding partners, and by targeting negative regulators of cell cycle progression. Plays a critical role in early lymphocyte development, where it is essential to prevent apoptosis in lymphoid precursors, allowing them to survive in response to IL7 and undergo proper lineage commitment. Has been shown to bind to the promoters of adenovirus major late protein and cyclin D1 and activate transcription. Required for early embryonic development during gastrulation. Represses RB1 transcription; this repression can be blocked by interaction with ZBTB49 isoform 3/ZNF509S1. This chain is Zinc finger and BTB domain-containing protein 17 (ZBTB17), found in Homo sapiens (Human).